Here is a 341-residue protein sequence, read N- to C-terminus: MTIQEELEATKQQFCIELNQVNSSKDLFDLKVRYLGKKGLFRCFADKLRECPLDQKALMGASINECKTYIEEQIREKNDSILLAEESAEFLKEKIDITLPGESHCPGGKHIVKKVLDDVVDIFICLGFCVREAPNIESEENNFSLLNFEEDHPARQMHDTFYLDGKTVLRTHTSNVQVRELSKGQPPIKVVAPGLCFRNEDISARSHVIFHQVEAFYLDRDVTLSDLTEMLTEFYHTFFKRKIELRLRHSYFPFVEPGIEVDVSCECRGSGCSLCKHTGWLEVAGAGMIHPQVLRNSGIDPEIYTGYAVGMGIERLAMLKHGISDIRLFCENDLRFLQQFS.

Glutamate 256 contacts Mg(2+).

It belongs to the class-II aminoacyl-tRNA synthetase family. Phe-tRNA synthetase alpha subunit type 1 subfamily. Tetramer of two alpha and two beta subunits. It depends on Mg(2+) as a cofactor.

Its subcellular location is the cytoplasm. It carries out the reaction tRNA(Phe) + L-phenylalanine + ATP = L-phenylalanyl-tRNA(Phe) + AMP + diphosphate + H(+). The polypeptide is Phenylalanine--tRNA ligase alpha subunit (Chlamydia felis (strain Fe/C-56) (Chlamydophila felis)).